The primary structure comprises 834 residues: Periplasmic nitrate reductase (834 aa).

The tat-type signal signal peptide spans 1 to 29 (MSLTRRQFAKANAAAIAATVAGMPIASTA). The region spanning 41 to 97 (LKWDKAPCRFCGTGCGVMVATRENRVVATHGDVKADVNRGINCVKGYFLSKIMYGTD) is the 4Fe-4S Mo/W bis-MGD-type domain. Positions 48, 51, 55, and 83 each coordinate [4Fe-4S] cluster. Mo-bis(molybdopterin guanine dinucleotide) contacts are provided by residues Lys-85, Gln-152, Asn-177, Cys-181, 214–221 (WGSNMAEM), 245–249 (STFEH), 264–266 (QTD), Met-375, Gln-379, Asn-485, 511–512 (SD), Lys-534, Asp-561, and 721–730 (TGRVLEHWHT). Phe-797 is a substrate binding site. 2 residues coordinate Mo-bis(molybdopterin guanine dinucleotide): Asn-805 and Lys-822.

Belongs to the prokaryotic molybdopterin-containing oxidoreductase family. NasA/NapA/NarB subfamily. In terms of assembly, component of the periplasmic nitrate reductase NapAB complex composed of NapA and NapB. [4Fe-4S] cluster serves as cofactor. It depends on Mo-bis(molybdopterin guanine dinucleotide) as a cofactor. Predicted to be exported by the Tat system. The position of the signal peptide cleavage has not been experimentally proven.

Its subcellular location is the periplasm. It catalyses the reaction 2 Fe(II)-[cytochrome] + nitrate + 2 H(+) = 2 Fe(III)-[cytochrome] + nitrite + H2O. Catalytic subunit of the periplasmic nitrate reductase complex NapAB. Receives electrons from NapB and catalyzes the reduction of nitrate to nitrite. This Stutzerimonas stutzeri (Pseudomonas stutzeri) protein is Periplasmic nitrate reductase.